A 529-amino-acid polypeptide reads, in one-letter code: Peptide chain release factor 3 (529 aa).

Positions 11–280 (SKRRTFAIIS…GLTEWAPAPK (270 aa)) constitute a tr-type G domain. GTP contacts are provided by residues 20-27 (SHPDAGKT), 88-92 (DTPGH), and 142-145 (NKLD).

The protein belongs to the TRAFAC class translation factor GTPase superfamily. Classic translation factor GTPase family. PrfC subfamily.

The protein localises to the cytoplasm. Functionally, increases the formation of ribosomal termination complexes and stimulates activities of RF-1 and RF-2. It binds guanine nucleotides and has strong preference for UGA stop codons. It may interact directly with the ribosome. The stimulation of RF-1 and RF-2 is significantly reduced by GTP and GDP, but not by GMP. The protein is Peptide chain release factor 3 of Vibrio parahaemolyticus serotype O3:K6 (strain RIMD 2210633).